We begin with the raw amino-acid sequence, 555 residues long: Formate--tetrahydrofolate ligase (555 aa).

Position 65–72 (65–72 (TPAGEGKS)) interacts with ATP.

It belongs to the formate--tetrahydrofolate ligase family.

The catalysed reaction is (6S)-5,6,7,8-tetrahydrofolate + formate + ATP = (6R)-10-formyltetrahydrofolate + ADP + phosphate. Its pathway is one-carbon metabolism; tetrahydrofolate interconversion. The polypeptide is Formate--tetrahydrofolate ligase (Staphylococcus aureus (strain COL)).